Consider the following 201-residue polypeptide: uncharacterized protein (201 aa).

The next 4 helical transmembrane spans lie at tyrosine 9–alanine 29, phenylalanine 42–valine 62, serine 86–valine 106, and leucine 126–methionine 146. Basic and acidic residues-rich tracts occupy residues glutamate 165–asparagine 174 and aspartate 182–glutamine 191. Positions glutamate 165–leucine 201 are disordered. The segment covering serine 192–leucine 201 has biased composition (polar residues).

Its subcellular location is the cell membrane. This is an uncharacterized protein from Mycoplasma genitalium (strain ATCC 33530 / DSM 19775 / NCTC 10195 / G37) (Mycoplasmoides genitalium).